We begin with the raw amino-acid sequence, 308 residues long: Probable GTP 3',8-cyclase (308 aa).

In terms of domain architecture, Radical SAM core spans Arg-4–Arg-222. Arg-13 provides a ligand contact to GTP. Cys-20, Cys-24, and Cys-27 together coordinate [4Fe-4S] cluster. Lys-60 serves as a coordination point for GTP. Gly-64 contacts S-adenosyl-L-methionine. Position 90 (Thr-90) interacts with GTP. Ser-114 is an S-adenosyl-L-methionine binding site. Lys-151 provides a ligand contact to GTP. Residues Cys-245 and Cys-248 each coordinate [4Fe-4S] cluster. Arg-250–Arg-252 lines the GTP pocket. Cys-262 lines the [4Fe-4S] cluster pocket.

The protein belongs to the radical SAM superfamily. MoaA family. [4Fe-4S] cluster serves as cofactor.

It catalyses the reaction GTP + AH2 + S-adenosyl-L-methionine = (8S)-3',8-cyclo-7,8-dihydroguanosine 5'-triphosphate + 5'-deoxyadenosine + L-methionine + A + H(+). It participates in cofactor biosynthesis; molybdopterin biosynthesis. Functionally, catalyzes the cyclization of GTP to (8S)-3',8-cyclo-7,8-dihydroguanosine 5'-triphosphate. The chain is Probable GTP 3',8-cyclase from Saccharolobus solfataricus (strain ATCC 35092 / DSM 1617 / JCM 11322 / P2) (Sulfolobus solfataricus).